The following is a 149-amino-acid chain: MRYNEKELLSLSRQRAEKAAELSMRGPKKGSVLKKRLVKLVVNFLFYFRIDEEEPIGALLLEHCRVSKEDEKGFSIHFIDEPEKKYMFECSSQEQCVEWVEALTNASYEFMRRSLMFYRNEILKMTGKDPLEQYGISGESRFQLENASL.

The PH domain occupies 15 to 108; sequence RAEKAAELSM…WVEALTNASY (94 aa).

This chain is Pleckstrin homology domain-containing family J member 1 (plekhj1), found in Xenopus tropicalis (Western clawed frog).